Reading from the N-terminus, the 520-residue chain is Poly(A)-specific ribonuclease PNLDC1 (520 aa).

4 residues coordinate Mg(2+): Asp-17, Glu-19, Asp-260, and Asp-354. The chain crosses the membrane as a helical span at residues 495 to 515; it reads VNCLLQVCGIVTAWALLAFIL.

This sequence belongs to the CAF1 family. Mg(2+) serves as cofactor.

Its subcellular location is the endoplasmic reticulum membrane. The enzyme catalyses Exonucleolytic cleavage of poly(A) to 5'-AMP.. Functionally, 3'-exoribonuclease that has a preference for poly(A) tails of mRNAs, thereby efficiently degrading poly(A) tails. Exonucleolytic degradation of the poly(A) tail is often the first step in the decay of eukaryotic mRNAs and is also used to silence certain maternal mRNAs translationally during oocyte maturation and early embryonic development. May act as a regulator of multipotency in embryonic stem cells. Is a critical factor for proper spermatogenesis, involved in pre-piRNAs processing to generate mature piRNAs. The chain is Poly(A)-specific ribonuclease PNLDC1 from Homo sapiens (Human).